We begin with the raw amino-acid sequence, 182 residues long: Adenine phosphoribosyltransferase (182 aa).

Belongs to the purine/pyrimidine phosphoribosyltransferase family. As to quaternary structure, homodimer.

The protein localises to the cytoplasm. The enzyme catalyses AMP + diphosphate = 5-phospho-alpha-D-ribose 1-diphosphate + adenine. It participates in purine metabolism; AMP biosynthesis via salvage pathway; AMP from adenine: step 1/1. In terms of biological role, catalyzes a salvage reaction resulting in the formation of AMP, that is energically less costly than de novo synthesis. The sequence is that of Adenine phosphoribosyltransferase from Streptomyces galbus.